The following is a 366-amino-acid chain: UDP-N-acetylglucosamine--N-acetylmuramyl-(pentapeptide) pyrophosphoryl-undecaprenol N-acetylglucosamine transferase (366 aa).

Residues 22–24, asparagine 134, arginine 170, serine 198, isoleucine 253, and glutamine 298 each bind UDP-N-acetyl-alpha-D-glucosamine; that span reads TGG.

Belongs to the glycosyltransferase 28 family. MurG subfamily.

It localises to the cell inner membrane. It carries out the reaction di-trans,octa-cis-undecaprenyl diphospho-N-acetyl-alpha-D-muramoyl-L-alanyl-D-glutamyl-meso-2,6-diaminopimeloyl-D-alanyl-D-alanine + UDP-N-acetyl-alpha-D-glucosamine = di-trans,octa-cis-undecaprenyl diphospho-[N-acetyl-alpha-D-glucosaminyl-(1-&gt;4)]-N-acetyl-alpha-D-muramoyl-L-alanyl-D-glutamyl-meso-2,6-diaminopimeloyl-D-alanyl-D-alanine + UDP + H(+). It functions in the pathway cell wall biogenesis; peptidoglycan biosynthesis. In terms of biological role, cell wall formation. Catalyzes the transfer of a GlcNAc subunit on undecaprenyl-pyrophosphoryl-MurNAc-pentapeptide (lipid intermediate I) to form undecaprenyl-pyrophosphoryl-MurNAc-(pentapeptide)GlcNAc (lipid intermediate II). In Xylella fastidiosa (strain M12), this protein is UDP-N-acetylglucosamine--N-acetylmuramyl-(pentapeptide) pyrophosphoryl-undecaprenol N-acetylglucosamine transferase.